The sequence spans 748 residues: Catalase-peroxidase (748 aa).

Residues 91-242 (WHSAGTYRIG…LAAVQMGLIY (152 aa)) constitute a cross-link (tryptophyl-tyrosyl-methioninium (Trp-Tyr) (with M-268)). H92 acts as the Proton acceptor in catalysis. The interval 194–223 (DRYGKGKGSSSQGEIPADAHRHGQEQARTA) is disordered. A cross-link (tryptophyl-tyrosyl-methioninium (Tyr-Met) (with W-91)) is located at residues 242 to 268 (YVNPEGPEGNPDPLAAAHDIRETFARM). H283 provides a ligand contact to heme b. The interval 288–310 (THGAGDAKHVGREPEGEDMDSQG) is disordered. The span at 290–301 (GAGDAKHVGREP) shows a compositional bias: basic and acidic residues.

The protein belongs to the peroxidase family. Peroxidase/catalase subfamily. Homodimer or homotetramer. Requires heme b as cofactor. In terms of processing, formation of the three residue Trp-Tyr-Met cross-link is important for the catalase, but not the peroxidase activity of the enzyme.

The catalysed reaction is H2O2 + AH2 = A + 2 H2O. It catalyses the reaction 2 H2O2 = O2 + 2 H2O. Bifunctional enzyme with both catalase and broad-spectrum peroxidase activity. The polypeptide is Catalase-peroxidase (Herbaspirillum seropedicae).